The following is a 185-amino-acid chain: Elongation factor P (185 aa).

This sequence belongs to the elongation factor P family.

The protein localises to the cytoplasm. It functions in the pathway protein biosynthesis; polypeptide chain elongation. In terms of biological role, involved in peptide bond synthesis. Stimulates efficient translation and peptide-bond synthesis on native or reconstituted 70S ribosomes in vitro. Probably functions indirectly by altering the affinity of the ribosome for aminoacyl-tRNA, thus increasing their reactivity as acceptors for peptidyl transferase. The polypeptide is Elongation factor P (Salinispora arenicola (strain CNS-205)).